Consider the following 331-residue polypeptide: MKQTVYIASPESQQIHVWNLNHEGALTLTQVVDVPGQVQPMVVSPDKRYLYVGVRPEFRVLAYRIAPDDGALTFAAESALPGSPTHISTDHQGQFVFVGSYNAGNVSVTRLEDGLPVGVVDVVEGLDGCHSANISPDNRTLWVPALKQDRICLFMVSDDGHLVAQDPAEVTTVEGAGPRHMVFHPNEQYAYCVNELNSSVDVWELKDPHGNIECVQTLDMMPENFSDTRWAADIHITPDGRHLYACDRTASLITVFSVSEDGSVLSKEGFQPTETQPRGFNVDHSGKYLIAAGQKSHHISVYEIVGEQGLLHEKGRYAVGQGPMWVVVNAH.

At K287 the chain carries N6-acetyllysine.

The protein belongs to the cycloisomerase 2 family.

The enzyme catalyses 6-phospho-D-glucono-1,5-lactone + H2O = 6-phospho-D-gluconate + H(+). The protein operates within carbohydrate degradation; pentose phosphate pathway; D-ribulose 5-phosphate from D-glucose 6-phosphate (oxidative stage): step 2/3. Catalyzes the hydrolysis of 6-phosphogluconolactone to 6-phosphogluconate. The polypeptide is 6-phosphogluconolactonase (Escherichia coli O8 (strain IAI1)).